Here is a 420-residue protein sequence, read N- to C-terminus: Serine--tRNA ligase (420 aa).

Residue Thr228–Glu230 participates in L-serine binding. Arg259–Glu261 contacts ATP. Glu282 is an L-serine binding site. Glu346 to Ser349 serves as a coordination point for ATP. Ser382 is an L-serine binding site.

The protein belongs to the class-II aminoacyl-tRNA synthetase family. Type-1 seryl-tRNA synthetase subfamily. Homodimer. The tRNA molecule binds across the dimer.

It localises to the cytoplasm. The enzyme catalyses tRNA(Ser) + L-serine + ATP = L-seryl-tRNA(Ser) + AMP + diphosphate + H(+). It catalyses the reaction tRNA(Sec) + L-serine + ATP = L-seryl-tRNA(Sec) + AMP + diphosphate + H(+). Its pathway is aminoacyl-tRNA biosynthesis; selenocysteinyl-tRNA(Sec) biosynthesis; L-seryl-tRNA(Sec) from L-serine and tRNA(Sec): step 1/1. Functionally, catalyzes the attachment of serine to tRNA(Ser). Is also able to aminoacylate tRNA(Sec) with serine, to form the misacylated tRNA L-seryl-tRNA(Sec), which will be further converted into selenocysteinyl-tRNA(Sec). The protein is Serine--tRNA ligase of Mycoplasmoides gallisepticum (strain R(low / passage 15 / clone 2)) (Mycoplasma gallisepticum).